A 321-amino-acid chain; its full sequence is Glucokinase (321 aa).

8–13 (GDVGGT) provides a ligand contact to ATP.

This sequence belongs to the bacterial glucokinase family.

The protein resides in the cytoplasm. It catalyses the reaction D-glucose + ATP = D-glucose 6-phosphate + ADP + H(+). This is Glucokinase from Salmonella paratyphi B (strain ATCC BAA-1250 / SPB7).